The following is a 140-amino-acid chain: Ribosome maturation factor RimP (140 aa).

Belongs to the RimP family.

The protein resides in the cytoplasm. Required for maturation of 30S ribosomal subunits. The protein is Ribosome maturation factor RimP of Campylobacter lari (strain RM2100 / D67 / ATCC BAA-1060).